We begin with the raw amino-acid sequence, 941 residues long: Cilia- and flagella-associated protein 69 (941 aa).

A compositionally biased stretch (low complexity) spans methionine 1–alanine 10. The interval methionine 1 to serine 23 is disordered.

The protein resides in the cell projection. It is found in the cilium. The protein localises to the flagellum. In terms of biological role, cilium- and flagellum-associated protein. In the olfactory epithelium, regulates the speed of activation and termination of the odor response and thus contributes to the robustness of olfactory transduction pathways. Required for sperm flagellum assembly and stability. In Papio anubis (Olive baboon), this protein is Cilia- and flagella-associated protein 69.